The following is an 87-amino-acid chain: Histone H1.C6/H1.C9 (87 aa).

A disordered region spans residues 1–87 (MSDAAVPPKK…KKAVKKAPKK (87 aa)). A compositionally biased stretch (basic residues) spans 11–87 (ASPKKASPKK…KKAVKKAPKK (77 aa)).

The protein localises to the nucleus. It is found in the chromosome. The chain is Histone H1.C6/H1.C9 from Trypanosoma cruzi.